The primary structure comprises 407 residues: O-methyltransferase verK (407 aa).

S-adenosyl-L-methionine contacts are provided by residues E263 and 295 to 297 (GDF). The active-site Proton acceptor is the H314.

The protein belongs to the class I-like SAM-binding methyltransferase superfamily. Cation-independent O-methyltransferase family.

It functions in the pathway mycotoxin biosynthesis. Functionally, O-methyltransferase; part of the gene cluster that mediates the biosynthesis of 11'-deoxyverticillin A, one of the dimeric epipolythiodioxopiperazines (ETPs) from the verticillin family that act as mycotoxins. 11'-deoxyverticillin A is required for normal conidiation. The nonribosomal peptide synthetase verP is speculated to be responsible for condensation of amino acids to form the carbon skeleton of verticillin, whereas the cluster-specific tailoring enzymes are involved in further modifications leading to the production of 11'-deoxyverticillin A. The polypeptide is O-methyltransferase verK (Clonostachys rogersoniana).